We begin with the raw amino-acid sequence, 279 residues long: Aquaporin A (279 aa).

Topologically, residues 1-40 are cytoplasmic; the sequence is MVKVVPLRFITYDPLKDPSKMIYRRPISKPVKAFKGFFSE. A helical transmembrane segment spans residues 41–61; that stretch reads FLGTLYLVYFCGGSVCAAFAV. Over 62–69 the chain is Extracellular; sequence AGDSAARA. A helical membrane pass occupies residues 70-90; that stretch reads LLGGLIQGMALAALIWAVSGV. At 91–114 the chain is on the cytoplasmic side; sequence SGCNLNPAVTLANLLSGRVGLIDS. The short motif at 96 to 98 is the NPA 1 element; the sequence is NPA. A helical transmembrane segment spans residues 115–135; the sequence is LYYVAAQILGCIAGAGILYGC. The Extracellular segment spans residues 136-158; sequence LPNMYRIDLGVPHLAPGMNTGQA. A helical membrane pass occupies residues 159 to 179; sequence FLMEMMLTSILCLCVLGTSVF. Over 180–188 the chain is Cytoplasmic; it reads NVWDRRLNR. The chain crosses the membrane as a helical span at residues 189–209; that stretch reads IAPFAIGLALFIGVAIGFNFS. Over 210 to 227 the chain is Extracellular; sequence GGALNPVRVLGPSIISGV. The NPA 2 signature appears at 214–216; that stretch reads NPV. A helical transmembrane segment spans residues 228–248; it reads WSHHWVYWLGPIVGAILAAFI. The Cytoplasmic portion of the chain corresponds to 249–279; it reads YRCLLQERFDVIERPGYIAPLIDPSTAVSSY.

It belongs to the MIP/aquaporin (TC 1.A.8) family.

It is found in the cell membrane. May form a water-specific channel. Required for prolonged spore survival on fruiting bodies. In Dictyostelium discoideum (Social amoeba), this protein is Aquaporin A (aqpA).